Consider the following 470-residue polypeptide: Argininosuccinate lyase (470 aa).

Belongs to the lyase 1 family. Argininosuccinate lyase subfamily.

It is found in the cytoplasm. It carries out the reaction 2-(N(omega)-L-arginino)succinate = fumarate + L-arginine. Its pathway is amino-acid biosynthesis; L-arginine biosynthesis; L-arginine from L-ornithine and carbamoyl phosphate: step 3/3. This is Argininosuccinate lyase from Mycobacterium tuberculosis (strain CDC 1551 / Oshkosh).